Reading from the N-terminus, the 336-residue chain is Ephrin-B2 (336 aa).

Positions 1–28 (MAMARSRRDSVWKYCWGLLMVLCRTAIS) are cleaved as a signal peptide. Residues 29–232 (RSIVLEPIYW…LLGSEVALFA (204 aa)) lie on the Extracellular side of the membrane. In terms of domain architecture, Ephrin RBD spans 31-167 (IVLEPIYWNS…TRAMKILMKV (137 aa)). An N-linked (GlcNAc...) asparagine glycan is attached at Asn39. 2 disulfides stabilise this stretch: Cys65–Cys104 and Cys92–Cys156. Asn142 carries an N-linked (GlcNAc...) asparagine glycan. Residues 170-216 (DASSAGSARNHGPTRRPELEAGTNGRSSTTSPFVKPNPGSSTDGNSA) form a disordered region. The span at 193–216 (NGRSSTTSPFVKPNPGSSTDGNSA) shows a compositional bias: polar residues. Residues 233–253 (GIASGCIIFIVIIITLVVLLL) traverse the membrane as a helical segment. Over 254 to 336 (KYRRRHRKHS…QSPANIYYKV (83 aa)) the chain is Cytoplasmic. Phosphoserine is present on Ser263. Thr277 is modified (phosphothreonine). Omega-N-methylarginine is present on Arg280. A PDZ-binding motif is present at residues 334–336 (YKV).

It belongs to the ephrin family. Interacts with PDZRN3. Binds to the ephrin receptor EPHA3, EPHA4 and EPHB4. In terms of processing, inducible phosphorylation of tyrosine residues in the cytoplasmic domain. As to expression, expressed in inner and outer pillar cells of the organ of Corti (at protein level). Expressed on lateral floor plate cells, specifically on commissural axon segments that have passed through the floor plate. Expressed in cells of the retinal ganglion cell layer during retinal axon guidance to the optic disk. Expressed in myogenic progenitor cells.

Its subcellular location is the cell membrane. It localises to the cell junction. It is found in the adherens junction. Functionally, cell surface transmembrane ligand for Eph receptors, a family of receptor tyrosine kinases which are crucial for migration, repulsion and adhesion during neuronal, vascular and epithelial development. Binds promiscuously Eph receptors residing on adjacent cells, leading to contact-dependent bidirectional signaling into neighboring cells. The signaling pathway downstream of the receptor is referred to as forward signaling while the signaling pathway downstream of the ephrin ligand is referred to as reverse signaling. Binds to receptor tyrosine kinase including EPHA4, EPHA3 and EPHB4. Together with EPHB4 plays a central role in heart morphogenesis and angiogenesis through regulation of cell adhesion and cell migration. EPHB4-mediated forward signaling controls cellular repulsion and segregation from EFNB2-expressing cells. May play a role in constraining the orientation of longitudinally projecting axons. The protein is Ephrin-B2 (Efnb2) of Mus musculus (Mouse).